The primary structure comprises 200 residues: TATA-box-binding protein 1 (200 aa).

Thr2 carries the post-translational modification N-acetylthreonine. 2 repeat units span residues 25 to 101 (LQNI…ARIV) and 115 to 192 (IQNI…YPVL).

This sequence belongs to the TBP family. In terms of assembly, belongs to the TFIID complex together with the TBP-associated factors (TAFs). Binds DNA as monomer. Interacts with TAF1 (via N-terminus). Interacts with MEE12/CCG1. Associates with PWP2 in the nucleus. Component of a nuclear protein complex containing at least TATA binding proteins (TBPs, e.g. TBP1 and TBP2) and ATX1.

The protein resides in the nucleus. In terms of biological role, general transcription factor that functions at the core of the DNA-binding multiprotein factor TFIID. Binding of TFIID to the TATA box is the initial transcriptional step of the pre-initiation complex (PIC), playing a role in the activation of eukaryotic genes transcribed by RNA polymerase II. The sequence is that of TATA-box-binding protein 1 from Arabidopsis thaliana (Mouse-ear cress).